Here is a 181-residue protein sequence, read N- to C-terminus: MMILVTGGARSGKSRHAEALIGDAPQVLYIATSQILDDEMAARIQHHKDGRPAHWRTAECWRHLDTLITADLAPDDAILLECITTMVTNLLFALGGENDPEQWDYAAMERAIDDEIQILIAACQRCPAKVVLVTNEVGMGIVPENRLARHFRDIAGRVNQRLAAAADEVWLVVSGIGVKIK.

GTP-binding positions include Gly7–Ser14 and Ala31–Ser33. His47 (GMP-histidine intermediate) is an active-site residue. Residues Lys48–Arg51, Glu59, and Glu81 each bind GTP.

This sequence belongs to the CobU/CobP family. In terms of assembly, homotrimer.

It carries out the reaction adenosylcob(III)inamide + GTP = adenosylcob(III)inamide phosphate + GDP + H(+). It catalyses the reaction adenosylcob(III)inamide + ATP = adenosylcob(III)inamide phosphate + ADP + H(+). The catalysed reaction is adenosylcob(III)inamide phosphate + GTP + H(+) = adenosylcob(III)inamide-GDP + diphosphate. Its pathway is cofactor biosynthesis; adenosylcobalamin biosynthesis; adenosylcobalamin from cob(II)yrinate a,c-diamide: step 5/7. It participates in cofactor biosynthesis; adenosylcobalamin biosynthesis; adenosylcobalamin from cob(II)yrinate a,c-diamide: step 6/7. Its function is as follows. Catalyzes ATP-dependent phosphorylation of adenosylcobinamide and addition of GMP to adenosylcobinamide phosphate. The sequence is that of Bifunctional adenosylcobalamin biosynthesis protein CobU (cobU) from Salmonella typhimurium (strain LT2 / SGSC1412 / ATCC 700720).